We begin with the raw amino-acid sequence, 813 residues long: Calpain-7 (813 aa).

N-acetylmethionine is present on methionine 1. Threonine 95 bears the Phosphothreonine mark. The Calpain catalytic domain occupies 232–540 (RERFAYPMPF…YDVIYLSWNP (309 aa)). Residues cysteine 290, histidine 458, and asparagine 478 contribute to the active site. A domain III region spans residues 541–701 (GLFKESTCIH…INGKWSGQSA (161 aa)). A domain N region spans residues 702-813 (GGCGNFQETH…IIPIKITQLQ (112 aa)).

It belongs to the peptidase C2 family. As to expression, ubiquitous.

Its subcellular location is the nucleus. In terms of biological role, calcium-regulated non-lysosomal thiol-protease. In Homo sapiens (Human), this protein is Calpain-7 (CAPN7).